We begin with the raw amino-acid sequence, 134 residues long: MKTIKVSVVTPDGPVYEADVEMVSAKAQSGELGVLPGHIPMVAPLEIGAVRLKKGNATELVAVSGGFLEVRPDRVTILAQAAERAEDIDVARAKAAKERAERRLQAKQEDIDHKRAELALRRAINRLNVANRNF.

Belongs to the ATPase epsilon chain family. As to quaternary structure, F-type ATPases have 2 components, CF(1) - the catalytic core - and CF(0) - the membrane proton channel. CF(1) has five subunits: alpha(3), beta(3), gamma(1), delta(1), epsilon(1). CF(0) has three main subunits: a, b and c.

The protein resides in the cell membrane. Functionally, produces ATP from ADP in the presence of a proton gradient across the membrane. In Anoxybacillus flavithermus (strain DSM 21510 / WK1), this protein is ATP synthase epsilon chain.